The following is a 405-amino-acid chain: MQFLHNKNVFALLLSQSFQSLAGVLVTIVLMVRIYQMTDSVFLAGLILSFMSFASIAASFCVSPVLRILGFKKVLAGANLLRAVFIILMAYSVTHHGQAFFWITLLFVFCFSFAGAFFQPARFALLPIIVPKKQYVKANGVISLSNQLFLTAGWGLGGLLTYAVPFELVVGAAICLFVLSGASISVLHVNEEEAAGTAETASVRSIWKDLMIIPIVRDITVMDMLEALAGSVWSSAILLAFTAAVLHETEVWWGMFNASYFIGAIVGSVIAIRFSSFFERNMGYAIMFSSLVMSALTLLFSFSPVPFLCALACAAMGPFYQVRDICQETMLQEVIPEQKRIGIMAAKNAILTPWSGVTYSIMGLVADAAGAKIAFIAAAALYIMTFLIALAQPRLVHYRRENRVQ.

Helical transmembrane passes span 9–29 (VFALLLSQSFQSLAGVLVTIV), 41–61 (VFLAGLILSFMSFASIAASFC), 74–94 (VLAGANLLRAVFIILMAYSVT), 98–118 (QAFFWITLLFVFCFSFAGAFF), 138–158 (ANGVISLSNQLFLTAGWGLGG), 168–190 (LVVGAAICLFVLSGASISVLHVN), 227–247 (ALAGSVWSSAILLAFTAAVLH), 252–272 (WWGMFNASYFIGAIVGSVIAI), 291–311 (LVMSALTLLFSFSPVPFLCAL), and 373–393 (IAFIAAAALYIMTFLIALAQP).

It belongs to the major facilitator superfamily. Drug:H(+) antiporter-3 (DHA3) (TC 2.A.1.21) family.

It is found in the cell membrane. This is an uncharacterized protein from Bacillus subtilis (strain 168).